The chain runs to 410 residues: Polyadenylation and cleavage factor homolog 5 (410 aa).

The segment covering 1–17 has biased composition (polar residues); it reads MASNGSFSAQRNANAGT. Residues 1-32 are disordered; that stretch reads MASNGSFSAQRNANAGTTMKRRNDNRGYGGGI. The stretch at 191-214 forms a coiled coil; it reads SKELTDLLSLLNNEKEKKTSEASN. The C2H2-type zinc finger occupies 247 to 269; it reads RQCTSCGVRFKCQEEHSKHMDWH.

As to quaternary structure, forms a complex with cleavage and polyadenylation specificity factor (CPSF) subunits CSTF77, CLPS3, PCFS4 and PCFS1.

It is found in the nucleus. In Arabidopsis thaliana (Mouse-ear cress), this protein is Polyadenylation and cleavage factor homolog 5.